The chain runs to 108 residues: Large ribosomal subunit protein uL24 (108 aa).

The protein belongs to the universal ribosomal protein uL24 family. In terms of assembly, part of the 50S ribosomal subunit.

Functionally, one of two assembly initiator proteins, it binds directly to the 5'-end of the 23S rRNA, where it nucleates assembly of the 50S subunit. One of the proteins that surrounds the polypeptide exit tunnel on the outside of the subunit. The sequence is that of Large ribosomal subunit protein uL24 from Frankia casuarinae (strain DSM 45818 / CECT 9043 / HFP020203 / CcI3).